Here is a 518-residue protein sequence, read N- to C-terminus: Probable Xaa-Pro aminopeptidase HCDG_07916 (518 aa).

The Mn(2+) site is built by Asp-289, Asp-300, Glu-437, and Glu-475.

Belongs to the peptidase M24B family. Mn(2+) serves as cofactor.

The catalysed reaction is Release of any N-terminal amino acid, including proline, that is linked to proline, even from a dipeptide or tripeptide.. Catalyzes the removal of a penultimate prolyl residue from the N-termini of peptides. In Ajellomyces capsulatus (strain H143) (Darling's disease fungus), this protein is Probable Xaa-Pro aminopeptidase HCDG_07916.